Here is a 79-residue protein sequence, read N- to C-terminus: Orally active insecticidal peptide (79 aa).

The signal sequence occupies residues 1–19; it reads MRVLFIIAGLALLSVVCYT. The propeptide occupies 20-44; sequence SEMKERSSFNEVLSEFFAADEPQER. Disulfide bonds link Cys-46/Cys-61, Cys-53/Cys-66, and Cys-60/Cys-73. An Alanine amide modification is found at Ala-77.

This sequence belongs to the neurotoxin 03 (Tx2) family. 01 subfamily. In terms of tissue distribution, expressed by the venom gland.

The protein localises to the secreted. Functionally, probable ion channel inhibitor. Shows insecticidal activity when injected into mealworms. In Selenotypus plumipes (Australian featherleg tarantula), this protein is Orally active insecticidal peptide.